The chain runs to 341 residues: Elongation factor Ts (341 aa).

Residues 80-83 (TDFV) form an involved in Mg(2+) ion dislocation from EF-Tu region.

The protein belongs to the EF-Ts family.

It localises to the cytoplasm. Associates with the EF-Tu.GDP complex and induces the exchange of GDP to GTP. It remains bound to the aminoacyl-tRNA.EF-Tu.GTP complex up to the GTP hydrolysis stage on the ribosome. The sequence is that of Elongation factor Ts from Lactobacillus johnsonii (strain CNCM I-12250 / La1 / NCC 533).